The sequence spans 440 residues: Adenylyltransferase and sulfurtransferase UBA4 (440 aa).

Methionine 1 is subject to N-acetylmethionine. ATP is bound by residues glycine 77, aspartate 98, 105–109 (SNLHR), lysine 122, and 166–167 (DS). 2 residues coordinate Zn(2+): cysteine 208 and cysteine 211. The active-site Glycyl thioester intermediate; for adenylyltransferase activity is cysteine 225. Zn(2+) contacts are provided by cysteine 286 and cysteine 289. The residue at position 326 (serine 326) is a Phosphoserine. Positions 339–438 (FLAKHIFLDV…YIDDIDQTIP (100 aa)) constitute a Rhodanese domain. Cysteine 397 acts as the Cysteine persulfide intermediate; for sulfurtransferase activity in catalysis.

The protein in the N-terminal section; belongs to the HesA/MoeB/ThiF family. UBA4 subfamily. Zn(2+) is required as a cofactor.

The protein resides in the cytoplasm. The protein localises to the cytosol. It participates in tRNA modification; 5-methoxycarbonylmethyl-2-thiouridine-tRNA biosynthesis. Its function is as follows. Plays a central role in 2-thiolation of mcm(5)S(2)U at tRNA wobble positions of cytosolic tRNA(Lys), tRNA(Glu) and tRNA(Gln). Acts by mediating the C-terminal thiocarboxylation of sulfur carrier URM1. Its N-terminus first activates URM1 as acyl-adenylate (-COAMP), then the persulfide sulfur on the catalytic cysteine is transferred to URM1 to form thiocarboxylation (-COSH) of its C-terminus. The reaction probably involves hydrogen sulfide that is generated from the persulfide intermediate and that acts as a nucleophile towards URM1. Subsequently, a transient disulfide bond is formed. Does not use thiosulfate as sulfur donor; NFS1 probably acting as a sulfur donor for thiocarboxylation reactions. Prior mcm(5) tRNA modification by the elongator complex is required for 2-thiolation. May also be involved in protein urmylation. The polypeptide is Adenylyltransferase and sulfurtransferase UBA4 (Saccharomyces cerevisiae (strain RM11-1a) (Baker's yeast)).